Consider the following 521-residue polypeptide: Aldehyde dehydrogenase, mitochondrial (521 aa).

Residues 1-21 (MLRPAALAAARLVLRQGRRLL) constitute a mitochondrion transit peptide. Residues 13 to 28 (VLRQGRRLLSAAPTQA) carry the SIFI-degron motif. N6-acetyllysine occurs at positions 56, 77, and 163. An NAD(+)-binding site is contributed by 266-271 (GSTEVG). Glutamate 289 serves as the catalytic Proton acceptor. The Nucleophile role is filled by cysteine 323. Residues lysine 372, lysine 379, lysine 387, lysine 430, lysine 432, lysine 445, and lysine 455 each carry the N6-acetyllysine modification.

The protein belongs to the aldehyde dehydrogenase family. Homotetramer. In terms of processing, in response to mitochondrial stress, the precursor protein is ubiquitinated by the SIFI complex in the cytoplasm before mitochondrial import, leading to its degradation. Within the SIFI complex, UBR4 initiates ubiquitin chain that are further elongated or branched by KCMF1.

The protein resides in the mitochondrion matrix. It carries out the reaction an aldehyde + NAD(+) + H2O = a carboxylate + NADH + 2 H(+). It participates in alcohol metabolism; ethanol degradation; acetate from ethanol: step 2/2. In terms of biological role, required for clearance of cellular formaldehyde, a cytotoxic and carcinogenic metabolite that induces DNA damage. The chain is Aldehyde dehydrogenase, mitochondrial (ALDH2) from Sus scrofa (Pig).